A 374-amino-acid polypeptide reads, in one-letter code: Layilin (374 aa).

Residues 1–24 (MQPGPALQAVLLAVLLSEPRSSKG) form the signal peptide. Residues 25–221 (RLLSGQLVCR…TKETFKESRE (197 aa)) are Extracellular-facing. A C-type lectin domain is found at 37–177 (TRRPCYKVIY…CNMKNNFICK (141 aa)). 2 disulfides stabilise this stretch: Cys-63-Cys-176 and Cys-142-Cys-168. Asn-109 carries N-linked (GlcNAc...) asparagine glycosylation. The interval 184–212 (STTPSIRPGGEATEPPTPVLPEETQKEDT) is disordered. A helical transmembrane segment spans residues 222–242 (AALNLAYILIPSIPLFLLLVV). Topologically, residues 243–374 (TSAACWVWIC…SGWVENEIYY (132 aa)) are cytoplasmic. Phosphoserine is present on residues Ser-279 and Ser-292. The tract at residues 323–367 (DYDNMAVNPSESGFVTLASMESGFVTNDIYEFSPDRMGRSKESGW) is interaction with NF2. The segment at 330–374 (NPSESGFVTLASMESGFVTNDIYEFSPDRMGRSKESGWVENEIYY) is interaction with TLN1. Tandem repeats lie at residues 333–337 (ESGFV), 343–347 (ESGFV), 349–352 (NDIY), 364–368 (ESGWV), and 370–373 (NEIY). Residues 333–368 (ESGFVTLASMESGFVTNDIYEFSPDRMGRSKESGWV) form a 3 X 5 AA repeats of E-S-G-X-V region. The segment at 349–373 (NDIYEFSPDRMGRSKESGWVENEIY) is 2 X 4 AA repeats of N-X-I-Y.

As to quaternary structure, interacts with NF2 and RDX. Interacts with TLN1. Widely expressed. Abundant in the ovary.

Its subcellular location is the membrane. Its function is as follows. Receptor for hyaluronate. In Cricetulus griseus (Chinese hamster), this protein is Layilin (LAYN).